Here is a 2327-residue protein sequence, read N- to C-terminus: Pre-mRNA-processing-splicing factor 8 homolog (2327 aa).

Polar residues predominate over residues 1–14; the sequence is MDDTNSNINQSNES. The segment at 1–20 is disordered; it reads MDDTNSNINQSNESQHLEEK. A reverse transcriptase homology domain region spans residues 801-1292; sequence TTVHWLEKRR…KIQTRVKIGL (492 aa). The linker stretch occupies residues 1293–1566; sequence NSKMPNRFPP…TLKISLIQIF (274 aa). An important for branch point selection region spans residues 1502–1515; that stretch reads MKYKKLTHAQRSGL. The restriction endonuclease homology domain stretch occupies residues 1570–1740; sequence LWQKIHESLV…LRERIRKGLQ (171 aa). Positions 1657–2023 are involved in interaction with pre-mRNA 5' splice site; that stretch reads GDFDSHDIER…QIAEIEKQKT (367 aa). The segment at 1755–2008 is RNase H homology domain; it reads NFGELFSNKI…ILGMEISAPS (254 aa). The region spanning 2093-2223 is the MPN domain; sequence TYVFPKNILK…LTAYHLTPSG (131 aa).

As to quaternary structure, part of the U5 snRNP complex and of the U4/U6-U5 tri-snRNP complex.

Its subcellular location is the nucleus speckle. Its function is as follows. Functions as a scaffold that mediates the ordered assembly of spliceosomal proteins and snRNAs. Required for the assembly of the U4/U6-U5 tri-snRNP complex. Functions as a scaffold that positions spliceosomal U2, U5 and U6 snRNAs at splice sites on pre-mRNA substrates, so that splicing can occur. Interacts with both the 5' and the 3' splice site. This chain is Pre-mRNA-processing-splicing factor 8 homolog (prpf8), found in Dictyostelium discoideum (Social amoeba).